The sequence spans 382 residues: GDP-mannose-dependent alpha-(1-6)-phosphatidylinositol monomannoside mannosyltransferase (382 aa).

The GDP-alpha-D-mannose site is built by Arg200, Lys205, Ile257, and Glu294.

Belongs to the glycosyltransferase group 1 family. Glycosyltransferase 4 subfamily.

The catalysed reaction is a 1,2-diacyl-sn-glycero-3-phospho-[alpha-D-mannopyranosyl-(1&lt;-&gt;6)-D-myo-inositol] + GDP-alpha-D-mannose = a 2,6-O-bis(alpha-D-mannopyranosyl)-1-phosphatidyl-1D-myo-inositol + GDP + H(+). It carries out the reaction a 1,2-diacyl-sn-glycero-3-phospho-[alpha-D-6-acyl-mannopyranosyl-(1&lt;-&gt;6)-D-myo-inositol] + GDP-alpha-D-mannose = a 2-O-(alpha-D-mannosyl)-6-O-(6-O-acyl-alpha-D-mannosyl)-1-phosphatidyl-1D-myo-inositol + GDP + H(+). The protein operates within phospholipid metabolism; phosphatidylinositol metabolism. Its function is as follows. Involved in the biosynthesis of phosphatidyl-myo-inositol mannosides (PIM) which are early precursors in the biosynthesis of lipomannans (LM) and lipoarabinomannans (LAM). Catalyzes the addition of a mannosyl residue from GDP-D-mannose (GDP-Man) to the position 6 of a phosphatidyl-myo-inositol bearing an alpha-1,2-linked mannose residue (PIM1) to generate phosphatidyl-myo-inositol bearing alpha-1,2- and alpha-1,6-linked mannose residues (Ac1PIM2). PimB also catalyzes the addition of a mannosyl residue from GDP-Man to the position 6 of phosphatidyl-myo-inositol bearing an acylated alpha-1,2-linked mannose residue (Ac1PIM1) to generate monoacylated phosphatidyl-myo-inositol bearing alpha-1,2- and alpha-1,6-linked mannose residues (Ac1PIM2). The addition of the second mannosyl residue by PimB preferentially occurs before the acylation of the mannosyl residue transferred by PimA. Also able to transfer a mannosyl residue from GDP-Man to the position 6 of a phosphatidyl-myo-inositol (PI), but this reaction is very slow. The polypeptide is GDP-mannose-dependent alpha-(1-6)-phosphatidylinositol monomannoside mannosyltransferase (Mycolicibacterium smegmatis (strain ATCC 700084 / mc(2)155) (Mycobacterium smegmatis)).